The following is a 293-amino-acid chain: Pyridoxal 5'-phosphate synthase subunit PdxS (293 aa).

Asp23 is a D-ribose 5-phosphate binding site. Lys80 (schiff-base intermediate with D-ribose 5-phosphate) is an active-site residue. Gly152 contributes to the D-ribose 5-phosphate binding site. Arg164 contributes to the D-glyceraldehyde 3-phosphate binding site. D-ribose 5-phosphate is bound by residues Gly213 and 234 to 235 (GS).

The protein belongs to the PdxS/SNZ family. In the presence of PdxT, forms a dodecamer of heterodimers.

It carries out the reaction aldehydo-D-ribose 5-phosphate + D-glyceraldehyde 3-phosphate + L-glutamine = pyridoxal 5'-phosphate + L-glutamate + phosphate + 3 H2O + H(+). The protein operates within cofactor biosynthesis; pyridoxal 5'-phosphate biosynthesis. In terms of biological role, catalyzes the formation of pyridoxal 5'-phosphate from ribose 5-phosphate (RBP), glyceraldehyde 3-phosphate (G3P) and ammonia. The ammonia is provided by the PdxT subunit. Can also use ribulose 5-phosphate and dihydroxyacetone phosphate as substrates, resulting from enzyme-catalyzed isomerization of RBP and G3P, respectively. This Thermus thermophilus (strain ATCC 27634 / DSM 579 / HB8) protein is Pyridoxal 5'-phosphate synthase subunit PdxS.